The primary structure comprises 444 residues: 23S rRNA (uracil(1939)-C(5))-methyltransferase RlmD (444 aa).

A TRAM domain is found at Arg-5–Glu-67. Residues Cys-80, Cys-86, Cys-89, and Cys-168 each coordinate [4Fe-4S] cluster. Positions 276, 305, 310, 326, 353, and 374 each coordinate S-adenosyl-L-methionine. Cys-400 functions as the Nucleophile in the catalytic mechanism.

This sequence belongs to the class I-like SAM-binding methyltransferase superfamily. RNA M5U methyltransferase family. RlmD subfamily.

The enzyme catalyses uridine(1939) in 23S rRNA + S-adenosyl-L-methionine = 5-methyluridine(1939) in 23S rRNA + S-adenosyl-L-homocysteine + H(+). Catalyzes the formation of 5-methyl-uridine at position 1939 (m5U1939) in 23S rRNA. This Xanthomonas oryzae pv. oryzae (strain MAFF 311018) protein is 23S rRNA (uracil(1939)-C(5))-methyltransferase RlmD.